A 435-amino-acid chain; its full sequence is Xylose isomerase (435 aa).

The Mg(2+) site is built by Asp306 and Asp308.

Belongs to the xylose isomerase family. As to quaternary structure, homotetramer. Mg(2+) serves as cofactor.

The protein resides in the cytoplasm. The catalysed reaction is alpha-D-xylose = alpha-D-xylulofuranose. This is Xylose isomerase from Allorhizobium ampelinum (strain ATCC BAA-846 / DSM 112012 / S4) (Agrobacterium vitis (strain S4)).